The sequence spans 205 residues: Large ribosomal subunit protein bL25A (205 aa).

The protein belongs to the bacterial ribosomal protein bL25 family. CTC subfamily. Part of the 50S ribosomal subunit; part of the 5S rRNA/L5/L18/L25 subcomplex. Contacts the 5S rRNA. Binds to the 5S rRNA independently of L5 and L18.

Functionally, this is one of the proteins that binds to the 5S RNA in the ribosome where it forms part of the central protuberance. This chain is Large ribosomal subunit protein bL25A, found in Symbiobacterium thermophilum (strain DSM 24528 / JCM 14929 / IAM 14863 / T).